A 539-amino-acid polypeptide reads, in one-letter code: Tripartite motif-containing protein 26 (539 aa).

The RING-type zinc finger occupies 16 to 57 (CSICLDYLRDPVTIDCGHVFCRSCTTDVRPISGSRPVCPLCK). A B box-type zinc finger spans residues 97–138 (QDAKLCERHREKLHYYCEDDGKLLCVMCRESREHRPHTAVLM). Residues C102, H105, C124, and H130 each contribute to the Zn(2+) site. Positions 188–227 (IVAEFEQGHQFLREREEHLLEQLAKLEQELTEGREKFKSR) form a coiled coil. Residues 295-539 (RGLREFQGKL…WPGTRLLLRP (245 aa)) form the B30.2/SPRY domain. A disordered region spans residues 376-437 (REGWSEDEEE…EEEEEVLESC (62 aa)). The segment covering 380-434 (SEDEEEGDEEEEGEEEEEEEEAGYGDGYDDWETDEDEESLGDEEEEEEEEEEEVL) has biased composition (acidic residues).

It belongs to the TRIM/RBCC family. As to quaternary structure, interacts with TBK1; this interaction bridges together TBK1 and NEMO in order to activate TBK1. Interacts with INCA1. Autoubiquitinates upon viral infection. In turn, autoubiquitinated TRIM26 recruits NEMO and bridges TBK1-NEMO interaction.

The protein resides in the cytoplasm. It localises to the nucleus. It catalyses the reaction S-ubiquitinyl-[E2 ubiquitin-conjugating enzyme]-L-cysteine + [acceptor protein]-L-lysine = [E2 ubiquitin-conjugating enzyme]-L-cysteine + N(6)-ubiquitinyl-[acceptor protein]-L-lysine.. Functionally, E3 ubiquitin-protein ligase which regulates the IFN-beta production and antiviral response downstream of various DNA-encoded pattern-recognition receptors (PRRs). Also plays a central role in determining the response to different forms of oxidative stress by controlling levels of DNA glycosylases NEIL1, NEIL3 and NTH1 that are involved in repair of damaged DNA. Promotes nuclear IRF3 ubiquitination and proteasomal degradation. Bridges together TBK1 and NEMO during the innate response to viral infection leading to the activation of TBK1. Positively regulates LPS-mediated inflammatory innate immune response by catalyzing the 'Lys-11'-linked polyubiquitination of TAB1 to enhance its activation and subsequent NF-kappa-B and MAPK signaling. In a manner independent of its catalytic activity, inhibits WWP2, a SOX2-directed E3 ubiquitin ligase, and thus protects SOX2 from polyubiquitination and proteasomal degradation. Ubiquitinates the histone acetyltransferase protein complex component PHF20 and thereby triggers its degradation in the nucleus after its recruitment by the histone demethylase KDM6B, serving as a scaffold protein. Upon induction by TGF-beta, ubiquitinates the TFIID component TAF7 for proteasomal degradation. Induces ferroptosis by ubiquitinating SLC7A11, a critical protein for lipid reactive oxygen species (ROS) scavenging. Inhibits directly hepatitis B virus replication by mediating HBX ubiquitination and subsequent degradation. In terms of biological role, (Microbial infection) Promotes herpes simplex virus type 2/HHV-2 infection in vaginal epithelial cells by decreasing the nuclear localization of IRF3, the primary mediator of type I interferon activation. This is Tripartite motif-containing protein 26 (TRIM26) from Homo sapiens (Human).